A 347-amino-acid chain; its full sequence is Melanoma-associated antigen B1 (347 aa).

A compositionally biased stretch (basic residues) spans 1 to 17; the sequence is MPRGQKSKLRAREKRRK. Positions 1–104 are disordered; sequence MPRGQKSKLR…QATTSTESSV (104 aa). Polar residues-rich tracts occupy residues 39–53 and 89–102; these read PSSS…TSSP and ENAS…STES. The 200-residue stretch at 108 to 307 folds into the MAGE domain; sequence VAWEAGMLMH…RDFPSHYEEA (200 aa). The tract at residues 315 to 347 is disordered; sequence AQVRSSVRARRRTTATTFRARSRAPFSRSSHPM. The span at 328 to 347 shows a compositional bias: low complexity; the sequence is TATTFRARSRAPFSRSSHPM.

Expressed only in testis.

The sequence is that of Melanoma-associated antigen B1 (MAGEB1) from Homo sapiens (Human).